The following is a 131-amino-acid chain: uncharacterized protein (131 aa).

Residues 15-43 (QLQAEHGSAPSNIASGPSSNQQQQEVQDE) are disordered. A compositionally biased stretch (polar residues) spans 23 to 34 (APSNIASGPSSN).

Belongs to the PDCD5 family.

This is an uncharacterized protein from Schizosaccharomyces pombe (strain 972 / ATCC 24843) (Fission yeast).